The sequence spans 247 residues: tRNA pseudouridine synthase A (247 aa).

Asp-52 functions as the Nucleophile in the catalytic mechanism. Tyr-113 contributes to the substrate binding site.

Belongs to the tRNA pseudouridine synthase TruA family. As to quaternary structure, homodimer.

It carries out the reaction uridine(38/39/40) in tRNA = pseudouridine(38/39/40) in tRNA. Functionally, formation of pseudouridine at positions 38, 39 and 40 in the anticodon stem and loop of transfer RNAs. The protein is tRNA pseudouridine synthase A of Sinorhizobium medicae (strain WSM419) (Ensifer medicae).